The chain runs to 298 residues: (S)-ureidoglycine aminohydrolase (298 aa).

Residues 1-20 (MRSLYLIVFIVISLVKASKS) form the signal peptide. Residues 222 to 288 (TMDFQPGEFL…ALGKTRSRYL (67 aa)) enclose the Cupin type-2 domain. Mn(2+)-binding residues include Glu235, His237, His241, and Gln275. Position 235 (Glu235) interacts with substrate. Positions 275, 287, and 291 each coordinate substrate.

Belongs to the UGHY family. In terms of assembly, homooctamer. Mn(2+) is required as a cofactor.

The protein resides in the endoplasmic reticulum. The enzyme catalyses (S)-2-ureidoglycine + H2O = (S)-ureidoglycolate + NH4(+). In terms of biological role, involved in the catabolism of purine nucleotides. Can use (S)-2-ureidoglycine as substrate, but not allantoate. The sequential activity of AAH, UGLYAH and UAH allows a complete purine breakdown without the intermediate generation of urea. This chain is (S)-ureidoglycine aminohydrolase (UGLYAH), found in Arabidopsis thaliana (Mouse-ear cress).